Reading from the N-terminus, the 488-residue chain is Monothiol glutaredoxin-S17 (488 aa).

The region spanning 2–107 is the Thioredoxin domain; that stretch reads SGTVKDIVSK…LANKVGKVAG (106 aa). Glutaredoxin domains lie at 154–256, 284–386, and 391–488; these read KSRL…GITT, RARL…GITG, and EDRL…TLSE. Lys-408 lines the glutathione pocket. Cys-416 lines the [2Fe-2S] cluster pocket. Glutathione contacts are provided by residues Arg-445, Phe-457, and 470–471; that span reads CD.

The protein belongs to the glutaredoxin family. CGFS subfamily. In terms of assembly, [2Fe-2S]-bridged holo-homodimer. Interacts in vitro with SUFE1, BOLA1, BOLA2 and BOLA4. Interacts in vivo only with BOLA2. Interacts with RGLG3 and RGLG4. Ubiquitinated at Lys-154. Polyubiquitinated by RGLG3 and RGLG4. Polyubiquitination of GRXS17 leads to its degradation by the proteasome.

The protein localises to the cytoplasm. In terms of biological role, may only reduce GSH-thiol disulfides, but not protein disulfides. Participates probably to the maturation of iron-sulfur proteins and to the regulation of the redox state of the BOLA proteins. The GRXS17-BOLA2 heterodimer binds a labile, oxygen sensitive iron-sulfur cluster. The polypeptide is Monothiol glutaredoxin-S17 (Arabidopsis thaliana (Mouse-ear cress)).